We begin with the raw amino-acid sequence, 1061 residues long: Translation initiation factor IF-2 (1061 aa).

Disordered stretches follow at residues 51-199 (FARG…VAVK) and 250-460 (AFQA…IPTE). Residues 67-77 (NEPKPKIDWSR) are compositionally biased toward basic and acidic residues. 5 stretches are compositionally biased toward low complexity: residues 97-113 (VAAA…KAPV), 120-130 (RPSAPRPAVTA), 167-177 (VPQPRQPSAVV), 184-199 (TPAI…VAVK), and 250-278 (AFQA…AEAP). Residues 279–291 (PVAPEKPAVPAPP) show a composition bias toward pro residues. Over residues 340 to 360 (SPGGPGGPGGGYGQRPSGPGG) the composition is skewed to gly residues. Residues 381–391 (GFNNGPRPGFG) are compositionally biased toward low complexity. Over residues 392–405 (QRPGGFGQRPGMGA) the composition is skewed to gly residues. In terms of domain architecture, tr-type G spans 552–728 (SRPPVVTVMG…CLVADLGNLK (177 aa)). Residues 561 to 568 (GHVDHGKT) are G1. Position 561–568 (561–568 (GHVDHGKT)) interacts with GTP. The tract at residues 586 to 590 (GITQH) is G2. Positions 614–617 (DTPG) are G3. GTP-binding positions include 614–618 (DTPGH) and 668–671 (NKID). The segment at 668–671 (NKID) is G4. Residues 704 to 706 (SAK) are G5.

Belongs to the TRAFAC class translation factor GTPase superfamily. Classic translation factor GTPase family. IF-2 subfamily.

The protein localises to the cytoplasm. In terms of biological role, one of the essential components for the initiation of protein synthesis. Protects formylmethionyl-tRNA from spontaneous hydrolysis and promotes its binding to the 30S ribosomal subunits. Also involved in the hydrolysis of GTP during the formation of the 70S ribosomal complex. The protein is Translation initiation factor IF-2 of Acidobacterium capsulatum (strain ATCC 51196 / DSM 11244 / BCRC 80197 / JCM 7670 / NBRC 15755 / NCIMB 13165 / 161).